Reading from the N-terminus, the 64-residue chain is Bacteriocin glycocin F (64 aa).

A signal peptide spans M1–G21. 2 disulfides stabilise this stretch: C26–C49 and C33–C42. An O-linked (GlcNAc) serine glycan is attached at S39. Residue C64 is glycosylated (S-linked (GlcNAc) cysteine).

The protein resides in the secreted. Its function is as follows. Has antibacterial activity against L.plantarum ATCC 8014. In purified form, the activity is bacteriostatic (IC(50)=2 nM) rather than bactericidal. The polypeptide is Bacteriocin glycocin F (Lactiplantibacillus plantarum (Lactobacillus plantarum)).